Consider the following 238-residue polypeptide: Ribonuclease PH (238 aa).

Phosphate contacts are provided by residues Arg86 and 124-126 (GTR).

It belongs to the RNase PH family. As to quaternary structure, homohexameric ring arranged as a trimer of dimers.

The enzyme catalyses tRNA(n+1) + phosphate = tRNA(n) + a ribonucleoside 5'-diphosphate. Its function is as follows. Phosphorolytic 3'-5' exoribonuclease that plays an important role in tRNA 3'-end maturation. Removes nucleotide residues following the 3'-CCA terminus of tRNAs; can also add nucleotides to the ends of RNA molecules by using nucleoside diphosphates as substrates, but this may not be physiologically important. Probably plays a role in initiation of 16S rRNA degradation (leading to ribosome degradation) during starvation. In Yersinia enterocolitica serotype O:8 / biotype 1B (strain NCTC 13174 / 8081), this protein is Ribonuclease PH.